A 261-amino-acid chain; its full sequence is 3-deoxy-manno-octulosonate cytidylyltransferase (261 aa).

It belongs to the KdsB family.

It is found in the cytoplasm. It carries out the reaction 3-deoxy-alpha-D-manno-oct-2-ulosonate + CTP = CMP-3-deoxy-beta-D-manno-octulosonate + diphosphate. The protein operates within nucleotide-sugar biosynthesis; CMP-3-deoxy-D-manno-octulosonate biosynthesis; CMP-3-deoxy-D-manno-octulosonate from 3-deoxy-D-manno-octulosonate and CTP: step 1/1. It participates in bacterial outer membrane biogenesis; lipopolysaccharide biosynthesis. Functionally, activates KDO (a required 8-carbon sugar) for incorporation into bacterial lipopolysaccharide in Gram-negative bacteria. In Dechloromonas aromatica (strain RCB), this protein is 3-deoxy-manno-octulosonate cytidylyltransferase.